Here is a 252-residue protein sequence, read N- to C-terminus: Ubiquinone/menaquinone biosynthesis C-methyltransferase UbiE (252 aa).

Residues Thr71, Asp100, 124 to 125 (DA), and Ser141 each bind S-adenosyl-L-methionine.

It belongs to the class I-like SAM-binding methyltransferase superfamily. MenG/UbiE family.

It catalyses the reaction a 2-demethylmenaquinol + S-adenosyl-L-methionine = a menaquinol + S-adenosyl-L-homocysteine + H(+). It carries out the reaction a 2-methoxy-6-(all-trans-polyprenyl)benzene-1,4-diol + S-adenosyl-L-methionine = a 5-methoxy-2-methyl-3-(all-trans-polyprenyl)benzene-1,4-diol + S-adenosyl-L-homocysteine + H(+). It functions in the pathway quinol/quinone metabolism; menaquinone biosynthesis; menaquinol from 1,4-dihydroxy-2-naphthoate: step 2/2. Its pathway is cofactor biosynthesis; ubiquinone biosynthesis. Its function is as follows. Methyltransferase required for the conversion of demethylmenaquinol (DMKH2) to menaquinol (MKH2) and the conversion of 2-polyprenyl-6-methoxy-1,4-benzoquinol (DDMQH2) to 2-polyprenyl-3-methyl-6-methoxy-1,4-benzoquinol (DMQH2). The polypeptide is Ubiquinone/menaquinone biosynthesis C-methyltransferase UbiE (Caulobacter sp. (strain K31)).